We begin with the raw amino-acid sequence, 155 residues long: Ribosomal RNA large subunit methyltransferase H (155 aa).

Residues Leu-72, Gly-103, and 122–127 (LSPLTL) each bind S-adenosyl-L-methionine.

This sequence belongs to the RNA methyltransferase RlmH family. In terms of assembly, homodimer.

It localises to the cytoplasm. It carries out the reaction pseudouridine(1915) in 23S rRNA + S-adenosyl-L-methionine = N(3)-methylpseudouridine(1915) in 23S rRNA + S-adenosyl-L-homocysteine + H(+). Specifically methylates the pseudouridine at position 1915 (m3Psi1915) in 23S rRNA. The polypeptide is Ribosomal RNA large subunit methyltransferase H (Pasteurella multocida (strain Pm70)).